We begin with the raw amino-acid sequence, 296 residues long: NAD kinase (296 aa).

D72 functions as the Proton acceptor in the catalytic mechanism. NAD(+)-binding positions include 72–73, 146–147, R157, K174, D176, 187–192, and Q247; these read DG, ND, and TAYALS.

This sequence belongs to the NAD kinase family. A divalent metal cation serves as cofactor.

It is found in the cytoplasm. The catalysed reaction is NAD(+) + ATP = ADP + NADP(+) + H(+). Involved in the regulation of the intracellular balance of NAD and NADP, and is a key enzyme in the biosynthesis of NADP. Catalyzes specifically the phosphorylation on 2'-hydroxyl of the adenosine moiety of NAD to yield NADP. This is NAD kinase from Pseudomonas fluorescens (strain ATCC BAA-477 / NRRL B-23932 / Pf-5).